Here is a 125-residue protein sequence, read N- to C-terminus: Small ribosomal subunit protein uS11 (125 aa).

The protein belongs to the universal ribosomal protein uS11 family. As to quaternary structure, part of the 30S ribosomal subunit. Interacts with proteins S7 and S18. Binds to IF-3.

Located on the platform of the 30S subunit, it bridges several disparate RNA helices of the 16S rRNA. Forms part of the Shine-Dalgarno cleft in the 70S ribosome. This Coprothermobacter proteolyticus (strain ATCC 35245 / DSM 5265 / OCM 4 / BT) protein is Small ribosomal subunit protein uS11.